The primary structure comprises 262 residues: Ribosome-recycling factor, mitochondrial (262 aa).

Residues 1 to 55 (MALGIRCFRLLHPAFSSYLADLSRPVSEVPMKTVRGRQRDHIQYSAHPAVPVRQF) constitute a mitochondrion transit peptide.

Belongs to the RRF family.

It localises to the mitochondrion. Responsible for the disassembly of ribosomes from messenger RNA at the termination of mitochondrial protein biosynthesis. Acts in collaboration with GFM2. Promotes mitochondrial ribosome recycling by dissolution of intersubunit contacts. The polypeptide is Ribosome-recycling factor, mitochondrial (Mrrf) (Rattus norvegicus (Rat)).